Here is a 443-residue protein sequence, read N- to C-terminus: Aspartic protease PEP3 (443 aa).

The first 36 residues, 1–36, serve as a signal peptide directing secretion; sequence MQNRPRVFDSAMNLSPNMHFLSLMPGLLLLSLQVHT. A propeptide spans 37 to 107 (activation peptide); it reads SPTPLKKTIR…NTVSKAMQAN (71 aa). A Peptidase A1 domain is found at 123–440; it reads YLSPVTIGGQ…DLRGPSLHVA (318 aa). D139 is an active-site residue. N180 and N293 each carry an N-linked (GlcNAc...) asparagine glycan. Residue D327 is part of the active site. C363 and C403 form a disulfide bridge. N-linked (GlcNAc...) asparagine glycans are attached at residues N364 and N388.

This sequence belongs to the peptidase A1 family. As to quaternary structure, monomer.

It is found in the secreted. Secreted aspartic endopeptidase that allows assimilation of proteinaceous substrates. The scissile peptide bond is attacked by a nucleophilic water molecule activated by two aspartic residues in the active site. Shows a broad primary substrate specificity. Favors hydrophobic residues at the P1 and P1' positions. The polypeptide is Aspartic protease PEP3 (Coccidioides posadasii (strain C735) (Valley fever fungus)).